The following is a 765-amino-acid chain: Probable dipeptidyl peptidase 4 (765 aa).

The N-terminal stretch at Met-1–Ala-14 is a signal peptide. Asn-35, Asn-78, Asn-101, Asn-110, Asn-169, Asn-218, Asn-465, and Asn-490 each carry an N-linked (GlcNAc...) asparagine glycan. Ser-613 (charge relay system) is an active-site residue. N-linked (GlcNAc...) asparagine glycosylation is present at Asn-665. Active-site charge relay system residues include Asp-690 and His-725.

The protein belongs to the peptidase S9B family.

It is found in the secreted. It catalyses the reaction Release of an N-terminal dipeptide, Xaa-Yaa-|-Zaa-, from a polypeptide, preferentially when Yaa is Pro, provided Zaa is neither Pro nor hydroxyproline.. Extracellular dipeptidyl-peptidase which removes N-terminal dipeptides sequentially from polypeptides having unsubstituted N-termini provided that the penultimate residue is proline. The protein is Probable dipeptidyl peptidase 4 (dpp4) of Neosartorya fischeri (strain ATCC 1020 / DSM 3700 / CBS 544.65 / FGSC A1164 / JCM 1740 / NRRL 181 / WB 181) (Aspergillus fischerianus).